Reading from the N-terminus, the 216-residue chain is Lipoprotein signal peptidase (216 aa).

A disordered region spans residues 1 to 21 (MATSRTAPTRAPSLRSSPALE). 3 helical membrane passes run 31-51 (VGALVILAVVALCVYLMDQIT), 89-109 (GSTWIFSLVGVGVLGFVIWYA), and 114-134 (STAWAILFGLLLGGLLGNLTD). Residues D149 and D164 contribute to the active site. The chain crosses the membrane as a helical span at residues 159-179 (IFNLADVAIVFSMGLFLLLTL). Positions 189-216 (QRDEGAGVSSASPAGDESAADKPENLSA) are disordered. The segment covering 207 to 216 (AADKPENLSA) has biased composition (basic and acidic residues).

Belongs to the peptidase A8 family.

The protein localises to the cell membrane. It carries out the reaction Release of signal peptides from bacterial membrane prolipoproteins. Hydrolyzes -Xaa-Yaa-Zaa-|-(S,diacylglyceryl)Cys-, in which Xaa is hydrophobic (preferably Leu), and Yaa (Ala or Ser) and Zaa (Gly or Ala) have small, neutral side chains.. The protein operates within protein modification; lipoprotein biosynthesis (signal peptide cleavage). In terms of biological role, this protein specifically catalyzes the removal of signal peptides from prolipoproteins. This is Lipoprotein signal peptidase from Leifsonia xyli subsp. xyli (strain CTCB07).